We begin with the raw amino-acid sequence, 372 residues long: UDP-N-acetylenolpyruvoylglucosamine reductase (372 aa).

Residues Val-29–Ser-205 form the FAD-binding PCMH-type domain. The active site involves Arg-177. Ser-260 acts as the Proton donor in catalysis. The active site involves Glu-364.

It belongs to the MurB family. FAD is required as a cofactor.

The protein resides in the cytoplasm. The catalysed reaction is UDP-N-acetyl-alpha-D-muramate + NADP(+) = UDP-N-acetyl-3-O-(1-carboxyvinyl)-alpha-D-glucosamine + NADPH + H(+). The protein operates within cell wall biogenesis; peptidoglycan biosynthesis. Cell wall formation. This is UDP-N-acetylenolpyruvoylglucosamine reductase from Mycobacterium avium (strain 104).